Here is a 64-residue protein sequence, read N- to C-terminus: Large ribosomal subunit protein bL35c (64 aa).

It belongs to the bacterial ribosomal protein bL35 family.

Its subcellular location is the plastid. It localises to the chloroplast. This chain is Large ribosomal subunit protein bL35c, found in Trieres chinensis (Marine centric diatom).